A 518-amino-acid polypeptide reads, in one-letter code: Glutamate--cysteine ligase (518 aa).

It belongs to the glutamate--cysteine ligase type 1 family. Type 1 subfamily.

It carries out the reaction L-cysteine + L-glutamate + ATP = gamma-L-glutamyl-L-cysteine + ADP + phosphate + H(+). Its pathway is sulfur metabolism; glutathione biosynthesis; glutathione from L-cysteine and L-glutamate: step 1/2. This Cronobacter sakazakii (strain ATCC BAA-894) (Enterobacter sakazakii) protein is Glutamate--cysteine ligase.